A 376-amino-acid polypeptide reads, in one-letter code: Deoxyguanosinetriphosphate triphosphohydrolase-like protein (376 aa).

The HD domain occupies 62 to 198 (RLTHSLEVSA…AALADDISYI (137 aa)).

The protein belongs to the dGTPase family. Type 2 subfamily.

The protein is Deoxyguanosinetriphosphate triphosphohydrolase-like protein of Rickettsia canadensis (strain McKiel).